The primary structure comprises 184 residues: GTP cyclohydrolase 1 (184 aa).

Cys75, His78, and Cys146 together coordinate Zn(2+).

The protein belongs to the GTP cyclohydrolase I family. Homomer.

The catalysed reaction is GTP + H2O = 7,8-dihydroneopterin 3'-triphosphate + formate + H(+). The protein operates within cofactor biosynthesis; 7,8-dihydroneopterin triphosphate biosynthesis; 7,8-dihydroneopterin triphosphate from GTP: step 1/1. The sequence is that of GTP cyclohydrolase 1 from Streptococcus pneumoniae serotype 19F (strain G54).